Here is an 809-residue protein sequence, read N- to C-terminus: BTB/POZ domain-containing protein At2g30600 (809 aa).

2 BTB domains span residues 211–273 (SDTV…QILE) and 351–420 (SDIK…NMED). Residues 466 to 537 (VVSSISSCKL…LMWCMKAEES (72 aa)) form the BACK domain.

It functions in the pathway protein modification; protein ubiquitination. Its function is as follows. May act as a substrate-specific adapter of an E3 ubiquitin-protein ligase complex (CUL3-RBX1-BTB) which mediates the ubiquitination and subsequent proteasomal degradation of target proteins. The polypeptide is BTB/POZ domain-containing protein At2g30600 (Arabidopsis thaliana (Mouse-ear cress)).